A 198-amino-acid polypeptide reads, in one-letter code: MNREEQLGVLESLLFAAGDAGLSTEQLTEVMEITHIEALNLLELLSDRYNGSADRGLILLELAGTFQLATKKAHAEFLRKLVEVPSNTVLSQASLETLAIIAYRQPVTRMEVDEVRGVQTDGPIRTLVAKGLVTDKGRVDGAGRAKLYVTTSEFLDAFGLNSLEDLPKLADPATDEPDQNEMDLFFDRFNQSKEQEEE.

The segment at 168–198 is disordered; it reads KLADPATDEPDQNEMDLFFDRFNQSKEQEEE.

The protein belongs to the ScpB family. In terms of assembly, homodimer. Homodimerization may be required to stabilize the binding of ScpA to the Smc head domains. Component of a cohesin-like complex composed of ScpA, ScpB and the Smc homodimer, in which ScpA and ScpB bind to the head domain of Smc. The presence of the three proteins is required for the association of the complex with DNA.

Its subcellular location is the cytoplasm. Its function is as follows. Participates in chromosomal partition during cell division. May act via the formation of a condensin-like complex containing Smc and ScpA that pull DNA away from mid-cell into both cell halves. The chain is Segregation and condensation protein B from Listeria monocytogenes serotype 4b (strain CLIP80459).